The following is a 262-amino-acid chain: uncharacterized protein (262 aa).

The protein belongs to the BtpA family.

This is an uncharacterized protein from Pyrococcus furiosus (strain ATCC 43587 / DSM 3638 / JCM 8422 / Vc1).